The primary structure comprises 892 residues: DNA mismatch repair protein MutS (892 aa).

Residues T663–M684 are disordered. Position 696–703 (G696–S703) interacts with ATP.

This sequence belongs to the DNA mismatch repair MutS family.

This protein is involved in the repair of mismatches in DNA. It is possible that it carries out the mismatch recognition step. This protein has a weak ATPase activity. This Nostoc punctiforme (strain ATCC 29133 / PCC 73102) protein is DNA mismatch repair protein MutS.